The sequence spans 472 residues: Eukaryotic translation initiation factor 2 subunit 3, Y-linked (472 aa).

An N-acetylalanine modification is found at Ala2. Phosphoserine is present on Ser16. Residues 39–247 (QATINIGTIG…YIVKKIPVPL (209 aa)) form the tr-type G domain. The G1 stretch occupies residues 48 to 55 (GHVAHGKS). 51–56 (AHGKST) lines the GTP pocket. The segment at 76 to 80 (NITIK) is G2. The segment at 134 to 137 (DCPG) is G3. Residues 190 to 193 (NKID) and 225 to 227 (SAQ) each bind GTP. Positions 190-193 (NKID) are G4. Residues 225-227 (SAQ) are G5.

Belongs to the TRAFAC class translation factor GTPase superfamily. Classic translation factor GTPase family. EIF2G subfamily. As to quaternary structure, eIF2 is a heterotrimer composed of an alpha (EIF2S1), a beta (EIF2S2) and a gamma (Eif2s3x and Eif2s3y) chain. eIF2 is member of the 43S pre-initiation complex (43S PIC). As to expression, widely expressed in males.

The enzyme catalyses GTP + H2O = GDP + phosphate + H(+). Member of the eIF2 complex that functions in the early steps of protein synthesis by forming a ternary complex with GTP and initiator tRNA. This complex binds to a 40S ribosomal subunit, followed by mRNA binding to form the 43S pre-initiation complex (43S PIC). Junction of the 60S ribosomal subunit to form the 80S initiation complex is preceded by hydrolysis of the GTP bound to eIF2 and release of an eIF2-GDP binary complex. In order for eIF2 to recycle and catalyze another round of initiation, the GDP bound to eIF2 must exchange with GTP by way of a reaction catalyzed by eIF-2B. Along with its paralog on chromosome X, may contribute to spermatogenesis up to the round spermatid stage. In Rattus norvegicus (Rat), this protein is Eukaryotic translation initiation factor 2 subunit 3, Y-linked (Eif2s3y).